A 1430-amino-acid chain; its full sequence is MAPAIDSTVNDLQPNTPNPEKALSSQAQAFVRAYSEDGDSGGQSVLGAEDPLSPLNPRGERFNARAWAKNLAAVTRERGEGFRQVGISFQNVNVFGYGTPTDFQKNVGNVWLALPAMIRQLFAPKGGQTRIDILNHFNGLVRPGEMCVVLGPPGSGCSTFLKTISGHTSGLHVNPDAHFNYQGLSAKEMITAHRGDCIYTAEVDVHFPMLTVGETLTFAARARSQQHLPEGISRNNYCDQLRDVIMAMYGIRHTIHTKVGDDFVRGVSGGERKRVSVAEATLANAPFQCWDNSTRGLDSANAIEFCRTLRLQSEIFGQTCVVSMYQAPQTAYDLFDKVLLIYEGRQIYFGSTSKAKDYFVNLGFECPARQTTPDFLTSITFPAERIPRPDCQPPRTPDEFSQVWKNSLECKALQDEINEYNMEHPINGPDADTFRQLKQASQAQGQKVTSPFTLTYSQQVKLCMWRGWARFKADPWPAVWVMVGNTIMALIMSSLFYNMGQDTNSFYGRSVVLFMAILFNAFSSILEVMTLYAQRPIVEKQSRYAFYHPSAEAYASVLVDMPMKITSTISFNLVFYFMTNLNRAPGNFFFYLLVVFLIVLAMSGVFRFIGSLSRTEQQAMVPASVLMLALLIFTGFVVPVDYMLPWCRWINYVNPVAYGYEALMVNEFHGREFTCSTYIPEYANATSGTGACSVVGATPGNLFWRNVGIIIAMVIFNYLMYFIASEYVTAKKSRGEILVFRRGHTPSIPAKGSGDLEKLESGHATTVLERSDPSMVHKGEGFQGSVSVFHWNNVCYDLEIKGKPRRILDNVDGWIKPGTLTALMGVSGAGKTTLLDCLANRRVGVGIVTGEMLVDGKVCDQSFQRKTGYAQQQDLHLETSTVREALTFSAFLRQPHSIPKADKLTYVEEVIKLLAMQDYADAVVGVIGEGLNVEQRKRLTLGVELVAKPPLLLFVDEPTSGLDSQTSWAVLDLLEKLSKAGQSILCTIHQPSAMLFQRFDRLLFLAEGGKPVYFGEIGNDSSTLIDYFERNGAKPCLPGSNPAEWMLEAVGAAPSISSEGDWPEIWRSSPEYQSVHHELARLKAVDIDQLSADKPDPTSYNEFAAPLWQQLVVVTQRAFLQSWRSPSYIYSKITLCIATSLFIGLVFFNAPLSIQGLQNQMFAIFEVMSIVGQLVDQQMPNFLTQRSLYEVRERPAKTYSWMVFMLSQIVTELPWSTLASVFMWALFYYPIGFHKNAQAAGQGTERGALMWLLFWQFLVWVSTFTHMCISFVDSADDGGNIANFLFVLAFFFCGVLASPSQMPRFWIFLYRASPLSYWVSAVLSTGFANVQVTCTDKEYTAFDPPKGSTCGEYMAEYISRAGGYVKDPQATESCGYCTIKDTNVFLAAVSSDYDTRWRNFGILWVYIGFNIAAALALYWIARMPKGKKRL.

The disordered stretch occupies residues methionine 1 to glutamine 26. An ABC transporter 1 domain is found at leucine 112–alanine 368. Asparagine 292 carries an N-linked (GlcNAc...) asparagine glycan. Helical transmembrane passes span tryptophan 476–phenylalanine 496, valine 511–leucine 531, valine 557–phenylalanine 577, glycine 586–phenylalanine 606, and methionine 620–valine 640. Asparagine 684 carries an N-linked (GlcNAc...) asparagine glycan. Residues valine 707–tyrosine 727 form a helical membrane-spanning segment. Residues phenylalanine 789–glycine 1032 form the ABC transporter 2 domain. Residue glycine 825–threonine 832 participates in ATP binding. An N-linked (GlcNAc...) asparagine glycan is attached at asparagine 1019. 6 helical membrane-spanning segments follow: residues isoleucine 1133–serine 1153, leucine 1213–phenylalanine 1233, leucine 1249–isoleucine 1269, glycine 1278–serine 1298, phenylalanine 1305–threonine 1325, and phenylalanine 1400–isoleucine 1420.

Belongs to the ABC transporter superfamily. ABCG family. PDR (TC 3.A.1.205) subfamily.

Its subcellular location is the cell membrane. Functionally, ABC transporter; part of the gene cluster that mediates the biosynthesis of eupenifeldin, a bistropolone meroterpenoid that acts as an antitumor agent. The protein is ABC transporter eupT of Phoma sp.